Here is a 665-residue protein sequence, read N- to C-terminus: Probable potassium transport system protein Kup 2 (665 aa).

Transmembrane regions (helical) follow at residues 13 to 33, 55 to 75, 98 to 118, 138 to 158, 167 to 187, 195 to 215, 217 to 237, 250 to 270, 295 to 315, 344 to 364, 375 to 395, 400 to 420, and 428 to 448; these read GLLVSIGIVYGDIGTSPLYVM, ISLILWTITLLTTVKYVLIAL, WLVLPALIGGAALLADGTLTP, IPVPNQNSVLIITIIILLFLF, IIGKTFGPIMLIWFTFLGLTG, LSLLEALNPVLAVKILFSPAN, VGVLILGAVFLATTGAEALYS, SWPYVFICLALNYLGQGVWIL, FFAIILATLAAIIASQALITG, IFIPSINKMLCAATIGIVFLF, GLAITVTMLMTTILLFEYLSL, ILLRLVFLFLFGAIESMFLIS, and GGYVTVIIAAFIGAIMYIWYF.

It belongs to the HAK/KUP transporter (TC 2.A.72) family.

It is found in the cell membrane. The catalysed reaction is K(+)(in) + H(+)(in) = K(+)(out) + H(+)(out). In terms of biological role, transport of potassium into the cell. Likely operates as a K(+):H(+) symporter. In Lactobacillus johnsonii (strain CNCM I-12250 / La1 / NCC 533), this protein is Probable potassium transport system protein Kup 2.